The chain runs to 225 residues: Ras-related protein Rab-21 (225 aa).

The residue at position 2 (A2) is an N-acetylalanine. Positions 28, 31, 32, 33, 34, 45, 46, 48, 50, and 51 each coordinate GTP. Residue T33 coordinates Mg(2+). Residues 43–56 (KFNDKHITTLQASF) carry the Switch 1 motif. Mg(2+) is bound by residues T51 and D74. Residues 76-94 (AGQERFHALGPIYYRDSNG) carry the Switch 2 motif. 6 residues coordinate GTP: G77, N132, K133, D135, A163, and K164. Positions 188 to 225 (ERAKGNGSSQPGTARRGVQIIDDEPQAQTSGGGCCSSG) are disordered. S-geranylgeranyl cysteine attachment occurs at residues C221 and C222. At C222 the chain carries Cysteine methyl ester. A propeptide spans 223–225 (SSG) (removed in mature form).

The protein belongs to the small GTPase superfamily. Rab family. Interacts with the cytoplasmic tail of integrins ITGA1, ITGA2, ITGA5, ITGA6, ITGA11 and ITGB1. Interacts with RABGEF1 (via VPS9 domain). Interacts with ANKRD27. Interacts with VAMP7. Interacts (in GTP-bound form) with VAMP8 in response to starvation; the interaction probably regulates VAMP8 endolysosomal trafficking. Interacts (active GTP-bound form) with TMED10; the interaction is indirect and regulates TMED10 abundance and localization at the Golgi. Mg(2+) is required as a cofactor. As to expression, widely expressed. In jejunal tissue, predominantly expressed in the apical region of the epithelial cell layer of the villi, weak expression, if any, in the crypt epithelium. Capillary endothelium and some cell types in the lamina propria also show expression.

It is found in the endoplasmic reticulum membrane. The protein resides in the golgi apparatus. Its subcellular location is the trans-Golgi network. It localises to the golgi apparatus membrane. The protein localises to the early endosome membrane. It is found in the cytoplasmic vesicle membrane. The protein resides in the cleavage furrow. Its subcellular location is the cell projection. It localises to the neuron projection. It carries out the reaction GTP + H2O = GDP + phosphate + H(+). With respect to regulation, regulated by guanine nucleotide exchange factors (GEFs) including ANKRD27 and RABGEF1, which promote the exchange of bound GDP for free GTP. Regulated by GTPase activating proteins (GAPs) which increase the GTP hydrolysis activity. Inhibited by GDP dissociation inhibitors (GDIs). In terms of biological role, the small GTPases Rab are key regulators of intracellular membrane trafficking, from the formation of transport vesicles to their fusion with membranes. Rabs cycle between an inactive GDP-bound form and an active GTP-bound form that is able to recruit to membranes different sets of downstream effectors directly responsible for vesicle formation, movement, tethering and fusion. RAB21 is involved in membrane trafficking control. During the mitosis of adherent cells, controls the endosomal trafficking of integrins which is required for the successful completion of cytokinesis. Regulates integrin internalization and recycling, but does not influence the traffic of endosomally translocated receptors in general. As a result, may regulate cell adhesion and migration. Involved in neurite growth. Following SBF2/MTMT13-mediated activation in response to starvation-induced autophagy, binds to and regulates SNARE protein VAMP8 endolysosomal transport required for SNARE-mediated autophagosome-lysosome fusion. Modulates protein levels of the cargo receptors TMED2 and TMED10, and required for appropriate Golgi localization of TMED10. The protein is Ras-related protein Rab-21 of Homo sapiens (Human).